Consider the following 89-residue polypeptide: Signal recognition particle 19 kDa protein (89 aa).

Belongs to the SRP19 family. Part of the signal recognition particle protein translocation system, which is composed of SRP and FtsY. Archaeal SRP consists of a 7S RNA molecule of 300 nucleotides and two protein subunits: SRP54 and SRP19.

It localises to the cytoplasm. Functionally, involved in targeting and insertion of nascent membrane proteins into the cytoplasmic membrane. Binds directly to 7S RNA and mediates binding of the 54 kDa subunit of the SRP. The sequence is that of Signal recognition particle 19 kDa protein from Methanococcus maripaludis (strain DSM 14266 / JCM 13030 / NBRC 101832 / S2 / LL).